We begin with the raw amino-acid sequence, 106 residues long: Ferredoxin (106 aa).

The [3Fe-4S] cluster site is built by Cys9 and Cys17. Cys21, Cys40, Cys43, and Cys46 together coordinate [4Fe-4S] cluster. The 4Fe-4S ferredoxin-type domain maps to 31 to 60 (RMLYIHPDECVDCGACEPVCPVEAIYYEDD). Residue Cys50 coordinates [3Fe-4S] cluster. The segment at 84–106 (GAAKVGKVDRDVEPVSSLPPQGE) is disordered.

The cofactor is [4Fe-4S] cluster. [3Fe-4S] cluster serves as cofactor.

Functionally, ferredoxins are iron-sulfur proteins that transfer electrons in a wide variety of metabolic reactions. In Saccharopolyspora erythraea (Streptomyces erythraeus), this protein is Ferredoxin (fdxA).